The primary structure comprises 277 residues: Shikimate dehydrogenase (NADP(+)) (277 aa).

Shikimate contacts are provided by residues 15-17 (SKS) and Thr-64. The Proton acceptor role is filled by Lys-68. Asn-89 and Asp-104 together coordinate shikimate. Residues 129–133 (GAGGA), 153–158 (NRTAKR), and Met-217 contribute to the NADP(+) site. Tyr-219 is a shikimate binding site. Gly-242 is an NADP(+) binding site.

The protein belongs to the shikimate dehydrogenase family. Homodimer.

It carries out the reaction shikimate + NADP(+) = 3-dehydroshikimate + NADPH + H(+). Its pathway is metabolic intermediate biosynthesis; chorismate biosynthesis; chorismate from D-erythrose 4-phosphate and phosphoenolpyruvate: step 4/7. In terms of biological role, involved in the biosynthesis of the chorismate, which leads to the biosynthesis of aromatic amino acids. Catalyzes the reversible NADPH linked reduction of 3-dehydroshikimate (DHSA) to yield shikimate (SA). This Hydrogenovibrio crunogenus (strain DSM 25203 / XCL-2) (Thiomicrospira crunogena) protein is Shikimate dehydrogenase (NADP(+)).